Reading from the N-terminus, the 448-residue chain is Homogentisate 1,2-dioxygenase (448 aa).

The active-site Proton acceptor is His303. Fe cation-binding residues include His346 and Glu352. Residues Tyr361 and His382 each contribute to the homogentisate site. Fe cation is bound at residue His382.

The protein belongs to the homogentisate dioxygenase family. In terms of assembly, hexamer; dimer of trimers. Fe cation is required as a cofactor.

It catalyses the reaction homogentisate + O2 = 4-maleylacetoacetate + H(+). The protein operates within amino-acid degradation; L-phenylalanine degradation; acetoacetate and fumarate from L-phenylalanine: step 4/6. Involved in the catabolism of homogentisate (2,5-dihydroxyphenylacetate or 2,5-OH-PhAc), a central intermediate in the degradation of phenylalanine and tyrosine. Catalyzes the oxidative ring cleavage of the aromatic ring of homogentisate to yield maleylacetoacetate. This chain is Homogentisate 1,2-dioxygenase, found in Rhodopseudomonas palustris (strain ATCC BAA-98 / CGA009).